A 101-amino-acid chain; its full sequence is Small ribosomal subunit protein uS14 (101 aa).

Belongs to the universal ribosomal protein uS14 family. Part of the 30S ribosomal subunit. Contacts proteins S3 and S10.

In terms of biological role, binds 16S rRNA, required for the assembly of 30S particles and may also be responsible for determining the conformation of the 16S rRNA at the A site. This is Small ribosomal subunit protein uS14 from Chromohalobacter salexigens (strain ATCC BAA-138 / DSM 3043 / CIP 106854 / NCIMB 13768 / 1H11).